The following is a 444-amino-acid chain: Probable glycine dehydrogenase (decarboxylating) subunit 1 (444 aa).

Belongs to the GcvP family. N-terminal subunit subfamily. The glycine cleavage system is composed of four proteins: P, T, L and H. In this organism, the P 'protein' is a heterodimer of two subunits.

The enzyme catalyses N(6)-[(R)-lipoyl]-L-lysyl-[glycine-cleavage complex H protein] + glycine + H(+) = N(6)-[(R)-S(8)-aminomethyldihydrolipoyl]-L-lysyl-[glycine-cleavage complex H protein] + CO2. Its function is as follows. The glycine cleavage system catalyzes the degradation of glycine. The P protein binds the alpha-amino group of glycine through its pyridoxal phosphate cofactor; CO(2) is released and the remaining methylamine moiety is then transferred to the lipoamide cofactor of the H protein. The sequence is that of Probable glycine dehydrogenase (decarboxylating) subunit 1 from Chlorobaculum tepidum (strain ATCC 49652 / DSM 12025 / NBRC 103806 / TLS) (Chlorobium tepidum).